We begin with the raw amino-acid sequence, 489 residues long: Poly(A) RNA polymerase GLD2 (489 aa).

The segment at 93–118 (RQRFSCPSPHNQSARNSNFTSQPVTR) is disordered. The span at 100–116 (SPHNQSARNSNFTSQPV) shows a compositional bias: polar residues. Mg(2+)-binding residues include aspartate 219 and aspartate 221. A PAP-associated domain is found at 386 to 440 (SLGDLFLGFLRYYATVFKWDKQVISVRMARTLPKSNCKEWKDKFICVEEPFNRTN).

This sequence belongs to the DNA polymerase type-B-like family. GLD2 subfamily. Mg(2+) is required as a cofactor. Mn(2+) serves as cofactor.

It is found in the cytoplasm. The catalysed reaction is RNA(n) + ATP = RNA(n)-3'-adenine ribonucleotide + diphosphate. Cytoplasmic poly(A) RNA polymerase that adds successive AMP monomers to the 3'-end of specific RNAs, forming a poly(A) tail. In contrast to the canonical nuclear poly(A) RNA polymerase, it only adds poly(A) to selected cytoplasmic mRNAs. May not play a role in replication-dependent histone mRNA degradation. The polypeptide is Poly(A) RNA polymerase GLD2 (Danio rerio (Zebrafish)).